Here is a 781-residue protein sequence, read N- to C-terminus: Probable serine/threonine-protein kinase C70.05c (781 aa).

2 disordered regions span residues 1 to 315 and 368 to 417; these read MPSD…PLVS and YSGK…TNIS. Low complexity predominate over residues 21-31; the sequence is ESPSSRSIGSG. Residues 43-63 show a composition bias toward polar residues; the sequence is FKNSFLSRKNSSQIKSPSDYK. Residues 64–73 are compositionally biased toward basic and acidic residues; the sequence is SSAHEQRVNH. A compositionally biased stretch (polar residues) spans 74 to 92; that stretch reads TTDSMAHVPGNNSPLQTPQ. S94 is modified (phosphoserine). Over residues 112 to 121 the composition is skewed to basic residues; sequence SRHHKPHHSG. Composition is skewed to polar residues over residues 136 to 146, 161 to 195, and 206 to 228; these read SNANSPTSESP, KNTS…PNSR, and NSAS…SLSR. S253 carries the phosphoserine modification. A compositionally biased stretch (low complexity) spans 272 to 304; that stretch reads PLTASPTPSSPTGTPNSMSKSPSLSSLASTGAS. Residues 379–406 show a composition bias toward polar residues; it reads NVGSSANTAPNSPTSANSSEGNQGNGPT. The region spanning 432–742 is the Protein kinase domain; that stretch reads AKRVVPRLSA…AQEALNLPFV (311 aa). ATP is bound by residues 452–460 and K480; that span reads MGSGATAVI. Catalysis depends on D584, which acts as the Proton acceptor.

This sequence belongs to the protein kinase superfamily. Ser/Thr protein kinase family.

It localises to the cytoplasm. It carries out the reaction L-seryl-[protein] + ATP = O-phospho-L-seryl-[protein] + ADP + H(+). The enzyme catalyses L-threonyl-[protein] + ATP = O-phospho-L-threonyl-[protein] + ADP + H(+). The sequence is that of Probable serine/threonine-protein kinase C70.05c from Schizosaccharomyces pombe (strain 972 / ATCC 24843) (Fission yeast).